Here is a 486-residue protein sequence, read N- to C-terminus: ATP-dependent 6-phosphofructokinase (486 aa).

Residues glycine 105, 171-172, and 196-199 each bind ATP; these read RG and GDGT. A Mg(2+)-binding site is contributed by aspartate 197. Residues 225-227, 270-272, glutamate 323, and 378-381 contribute to the substrate site; these read TID, MGR, and YMIR. The Proton acceptor role is filled by aspartate 227. Residues 484–486 carry the Peroxisomal targeting signal motif; that stretch reads SKV.

Belongs to the phosphofructokinase type A (PFKA) family. PPi-dependent PFK group II subfamily. Atypical ATP-dependent clade 'X' sub-subfamily. As to quaternary structure, homotetramer. Mg(2+) serves as cofactor.

The protein localises to the glycosome. It carries out the reaction beta-D-fructose 6-phosphate + ATP = beta-D-fructose 1,6-bisphosphate + ADP + H(+). Its pathway is carbohydrate degradation; glycolysis; D-glyceraldehyde 3-phosphate and glycerone phosphate from D-glucose: step 3/4. Its activity is regulated as follows. Allosterically activated by AMP. Its function is as follows. Catalyzes the phosphorylation of D-fructose 6-phosphate to fructose 1,6-bisphosphate by ATP, the first committing step of glycolysis. The chain is ATP-dependent 6-phosphofructokinase from Leishmania donovani.